Consider the following 374-residue polypeptide: Putative phosphoserine aminotransferase (374 aa).

R48 is an L-glutamate binding site. Pyridoxal 5'-phosphate is bound by residues 82 to 83 (AT), F106, T152, D174, and Q197. An N6-(pyridoxal phosphate)lysine modification is found at K198. 249–250 (NT) is a pyridoxal 5'-phosphate binding site.

Belongs to the class-V pyridoxal-phosphate-dependent aminotransferase family. SerC subfamily. In terms of assembly, homodimer. Pyridoxal 5'-phosphate serves as cofactor.

Its subcellular location is the cytoplasm. It catalyses the reaction O-phospho-L-serine + 2-oxoglutarate = 3-phosphooxypyruvate + L-glutamate. The enzyme catalyses 4-(phosphooxy)-L-threonine + 2-oxoglutarate = (R)-3-hydroxy-2-oxo-4-phosphooxybutanoate + L-glutamate. It participates in amino-acid biosynthesis; L-serine biosynthesis; L-serine from 3-phospho-D-glycerate: step 2/3. It functions in the pathway cofactor biosynthesis; pyridoxine 5'-phosphate biosynthesis; pyridoxine 5'-phosphate from D-erythrose 4-phosphate: step 3/5. In terms of biological role, catalyzes the reversible conversion of 3-phosphohydroxypyruvate to phosphoserine and of 3-hydroxy-2-oxo-4-phosphonooxybutanoate to phosphohydroxythreonine. This Mycolicibacterium paratuberculosis (strain ATCC BAA-968 / K-10) (Mycobacterium paratuberculosis) protein is Putative phosphoserine aminotransferase.